The sequence spans 146 residues: Large ribosomal subunit protein uL13 (146 aa).

The protein belongs to the universal ribosomal protein uL13 family. In terms of assembly, part of the 50S ribosomal subunit.

Functionally, this protein is one of the early assembly proteins of the 50S ribosomal subunit, although it is not seen to bind rRNA by itself. It is important during the early stages of 50S assembly. The chain is Large ribosomal subunit protein uL13 from Malacoplasma penetrans (strain HF-2) (Mycoplasma penetrans).